A 536-amino-acid chain; its full sequence is Phosphoenolpyruvate carboxykinase (ATP) (536 aa).

3 residues coordinate substrate: R61, Y195, and K201. Residues K201, H220, and 236-244 each bind ATP; that span reads GLSGTGKTT. Positions 201 and 220 each coordinate Mn(2+). D257 is a Mn(2+) binding site. Residues E285, R323, and T448 each coordinate ATP. R323 lines the substrate pocket.

Belongs to the phosphoenolpyruvate carboxykinase (ATP) family. Mn(2+) is required as a cofactor.

Its subcellular location is the cytoplasm. It carries out the reaction oxaloacetate + ATP = phosphoenolpyruvate + ADP + CO2. It functions in the pathway carbohydrate biosynthesis; gluconeogenesis. Involved in the gluconeogenesis. Catalyzes the conversion of oxaloacetate (OAA) to phosphoenolpyruvate (PEP) through direct phosphoryl transfer between the nucleoside triphosphate and OAA. In Methylobacterium nodulans (strain LMG 21967 / CNCM I-2342 / ORS 2060), this protein is Phosphoenolpyruvate carboxykinase (ATP).